The sequence spans 107 residues: uncharacterized protein (107 aa).

Residues Gln-86–Val-107 form a disordered region. A compositionally biased stretch (acidic residues) spans Glu-92–Val-107.

This is an uncharacterized protein from Rickettsia prowazekii (strain Madrid E).